The sequence spans 673 residues: MANEEFTRHYAWPVPVASNDEGRGTARIPIQAQSIVAGEDGRDTSVPTALSRPPIEDMPHGVQETSASGGRLGAARLRDSVIPPGISEARTDLSAILRKKSGSFRTGMQYLRGLERENFDKQDREASALPDLSARGIKRPREIEYPGNASGLTIKRQDGLGIEINTISASSPVNRAAHSSNWQGAPEPGVYNVQPSADRAQNSAQESSTFPDGTSVSALYSGPLAEWFERDTGSETTRNSGNTISSPLRGLEEFGDSADSRYLGREAQSLSVTVTTPNSNAEASSHSAHTETLDDVSSDRSSEQGRGPLGAAILGSHHDLSPRAQKLSQTNRDSPELTDADLAKVDAVFESLSKGPPAGESAAPDFRERGPGSAFQKEGVSDRANGVPTNWEVPFGRGGGHSPQALRSSGVELDDFPDFTEAELAKIDALVESHSNRSLSVRNIVPDLRGAGADNVFRKEGVVERAEKMPIDSVSLTRLNGERSRSPKTSQASLEDFPDLTDADLAHIEESERIARTAVEKGKQKISTEADTRFDLGNSSAPRVSPRSVTPLVPNANQPITSWFYEAQKTCDKLVENTYVKPAVDSSRARNDVENTAARLGDPAPALGHDNLGRTRALTPVRDVMSRPSADRQLASHAAEHSAIDDIWKRDDRDRRTHPYRGLDSRSREGCGR.

6 disordered regions span residues 36–73 (VAGE…GRLG), 171–216 (SPVN…GTSV), 229–409 (ERDT…LRSS), 478–497 (RLNG…LEDF), 520–552 (EKGK…VTPL), and 585–673 (DSSR…GCGR). Polar residues-rich tracts occupy residues 171–183 (SPVN…SNWQ), 193–216 (VQPS…GTSV), 234–246 (SETT…TISS), and 268–277 (QSLSVTVTTP). Residues 278 to 287 (NSNAEASSHS) show a composition bias toward low complexity. Over residues 288 to 303 (AHTETLDDVSSDRSSE) the composition is skewed to basic and acidic residues. Composition is skewed to basic and acidic residues over residues 520–534 (EKGK…DTRF) and 638–673 (AAEH…GCGR).

The protein is Protein VirD3 (virD3) of Agrobacterium fabrum (strain C58 / ATCC 33970) (Agrobacterium tumefaciens (strain C58)).